The primary structure comprises 710 residues: Protein Smaug homolog 1 (710 aa).

2 disordered regions span residues 276 to 319 (ARGS…FQDE) and 441 to 476 (NQAT…ESDL). A compositionally biased stretch (polar residues) spans 309 to 318 (QSTACNTFQD). One can recognise an SAM domain in the interval 319–379 (EGSGMKDVPA…KIVISIQKLK (61 aa)).

This sequence belongs to the SMAUG family.

The protein resides in the cytoplasm. Its subcellular location is the cell projection. The protein localises to the dendrite. It is found in the synapse. It localises to the synaptosome. Acts as a translational repressor. This is Protein Smaug homolog 1 (samd4a) from Xenopus laevis (African clawed frog).